The chain runs to 86 residues: Large ribosomal subunit protein bL31B (86 aa).

Belongs to the bacterial ribosomal protein bL31 family. Type B subfamily. In terms of assembly, part of the 50S ribosomal subunit.

The polypeptide is Large ribosomal subunit protein bL31B (Burkholderia lata (strain ATCC 17760 / DSM 23089 / LMG 22485 / NCIMB 9086 / R18194 / 383)).